A 341-amino-acid chain; its full sequence is Glucokinase (341 aa).

Residue 18–23 participates in ATP binding; that stretch reads GDIGGT.

It belongs to the bacterial glucokinase family.

Its subcellular location is the cytoplasm. The catalysed reaction is D-glucose + ATP = D-glucose 6-phosphate + ADP + H(+). In Rhizobium johnstonii (strain DSM 114642 / LMG 32736 / 3841) (Rhizobium leguminosarum bv. viciae), this protein is Glucokinase.